Here is a 134-residue protein sequence, read N- to C-terminus: Profilin-3 (134 aa).

Residues Cys-13 and Cys-118 are joined by a disulfide bond. An Involved in PIP2 interaction motif is present at residues Ala-84–Thr-100. Residue Thr-114 is modified to Phosphothreonine.

This sequence belongs to the profilin family. As to quaternary structure, occurs in many kinds of cells as a complex with monomeric actin in a 1:1 ratio. Post-translationally, phosphorylated by MAP kinases.

It is found in the cytoplasm. The protein resides in the cytoskeleton. Binds to actin and affects the structure of the cytoskeleton. At high concentrations, profilin prevents the polymerization of actin, whereas it enhances it at low concentrations. The polypeptide is Profilin-3 (Olea europaea (Common olive)).